A 920-amino-acid polypeptide reads, in one-letter code: Isoleucine--tRNA ligase (920 aa).

Residues 57–67 carry the 'HIGH' region motif; the sequence is PYANGDIHLGH. Residue Glu-560 coordinates L-isoleucyl-5'-AMP. A 'KMSKS' region motif is present at residues 601-605; sequence KMSKS. Lys-604 contacts ATP. Zn(2+) is bound by residues Cys-890, Cys-893, Cys-910, and Cys-913.

This sequence belongs to the class-I aminoacyl-tRNA synthetase family. IleS type 1 subfamily. In terms of assembly, monomer. The cofactor is Zn(2+).

Its subcellular location is the cytoplasm. It carries out the reaction tRNA(Ile) + L-isoleucine + ATP = L-isoleucyl-tRNA(Ile) + AMP + diphosphate. Functionally, catalyzes the attachment of isoleucine to tRNA(Ile). As IleRS can inadvertently accommodate and process structurally similar amino acids such as valine, to avoid such errors it has two additional distinct tRNA(Ile)-dependent editing activities. One activity is designated as 'pretransfer' editing and involves the hydrolysis of activated Val-AMP. The other activity is designated 'posttransfer' editing and involves deacylation of mischarged Val-tRNA(Ile). The protein is Isoleucine--tRNA ligase of Caldicellulosiruptor saccharolyticus (strain ATCC 43494 / DSM 8903 / Tp8T 6331).